Here is a 317-residue protein sequence, read N- to C-terminus: UV DNA damage endonuclease (317 aa).

It belongs to the uve1/UvsE family.

Component in a DNA repair pathway. Removal of UV LIGHT damaged nucleotides. Recognizes pyrimidine dimers and cleave a phosphodiester bond immediately 5' to the lesion. In Bacillus cereus (strain 03BB102), this protein is UV DNA damage endonuclease.